The chain runs to 305 residues: UDP-3-O-acyl-N-acetylglucosamine deacetylase (305 aa).

Residues His-79, His-238, and Asp-242 each contribute to the Zn(2+) site. The Proton donor role is filled by His-265.

It belongs to the LpxC family. Requires Zn(2+) as cofactor.

The enzyme catalyses a UDP-3-O-[(3R)-3-hydroxyacyl]-N-acetyl-alpha-D-glucosamine + H2O = a UDP-3-O-[(3R)-3-hydroxyacyl]-alpha-D-glucosamine + acetate. The protein operates within glycolipid biosynthesis; lipid IV(A) biosynthesis; lipid IV(A) from (3R)-3-hydroxytetradecanoyl-[acyl-carrier-protein] and UDP-N-acetyl-alpha-D-glucosamine: step 2/6. Functionally, catalyzes the hydrolysis of UDP-3-O-myristoyl-N-acetylglucosamine to form UDP-3-O-myristoylglucosamine and acetate, the committed step in lipid A biosynthesis. The chain is UDP-3-O-acyl-N-acetylglucosamine deacetylase from Pasteurella multocida (strain Pm70).